We begin with the raw amino-acid sequence, 390 residues long: Succinate--CoA ligase [ADP-forming] subunit beta (390 aa).

Residues 9–245 enclose the ATP-grasp domain; that stretch reads KHLLKKYNIP…TTQEDEHETM (237 aa). ATP-binding positions include Lys-46, 53–55, Glu-99, Ser-102, and Glu-107; that span reads GRG. Mg(2+)-binding residues include Asn-200 and Asp-214. Residues Asn-265 and 322–324 contribute to the substrate site; that span reads GIV.

It belongs to the succinate/malate CoA ligase beta subunit family. Heterotetramer of two alpha and two beta subunits. Mg(2+) serves as cofactor.

The enzyme catalyses succinate + ATP + CoA = succinyl-CoA + ADP + phosphate. It carries out the reaction GTP + succinate + CoA = succinyl-CoA + GDP + phosphate. The protein operates within carbohydrate metabolism; tricarboxylic acid cycle; succinate from succinyl-CoA (ligase route): step 1/1. Succinyl-CoA synthetase functions in the citric acid cycle (TCA), coupling the hydrolysis of succinyl-CoA to the synthesis of either ATP or GTP and thus represents the only step of substrate-level phosphorylation in the TCA. The beta subunit provides nucleotide specificity of the enzyme and binds the substrate succinate, while the binding sites for coenzyme A and phosphate are found in the alpha subunit. The chain is Succinate--CoA ligase [ADP-forming] subunit beta from Coxiella burnetii (strain RSA 493 / Nine Mile phase I).